Reading from the N-terminus, the 433-residue chain is Glutamate-1-semialdehyde 2,1-aminomutase (433 aa).

At Lys272 the chain carries N6-(pyridoxal phosphate)lysine.

Belongs to the class-III pyridoxal-phosphate-dependent aminotransferase family. HemL subfamily. In terms of assembly, homodimer. It depends on pyridoxal 5'-phosphate as a cofactor.

Its subcellular location is the cytoplasm. The catalysed reaction is (S)-4-amino-5-oxopentanoate = 5-aminolevulinate. The protein operates within porphyrin-containing compound metabolism; protoporphyrin-IX biosynthesis; 5-aminolevulinate from L-glutamyl-tRNA(Glu): step 2/2. This Methylacidiphilum infernorum (isolate V4) (Methylokorus infernorum (strain V4)) protein is Glutamate-1-semialdehyde 2,1-aminomutase.